The sequence spans 320 residues: Glycerol-3-phosphate dehydrogenase [NAD(P)+] (320 aa).

NADPH contacts are provided by Ser14, Phe15, Arg35, and Lys109. Residues Lys109 and Gly137 each contribute to the sn-glycerol 3-phosphate site. Ala141 contacts NADPH. Positions 192, 248, 258, 259, and 260 each coordinate sn-glycerol 3-phosphate. The active-site Proton acceptor is Lys192. Arg259 contacts NADPH. NADPH-binding residues include Leu283 and Glu285.

Belongs to the NAD-dependent glycerol-3-phosphate dehydrogenase family.

It localises to the cytoplasm. It catalyses the reaction sn-glycerol 3-phosphate + NAD(+) = dihydroxyacetone phosphate + NADH + H(+). The enzyme catalyses sn-glycerol 3-phosphate + NADP(+) = dihydroxyacetone phosphate + NADPH + H(+). It functions in the pathway membrane lipid metabolism; glycerophospholipid metabolism. Its function is as follows. Catalyzes the reduction of the glycolytic intermediate dihydroxyacetone phosphate (DHAP) to sn-glycerol 3-phosphate (G3P), the key precursor for phospholipid synthesis. The chain is Glycerol-3-phosphate dehydrogenase [NAD(P)+] from Rickettsia typhi (strain ATCC VR-144 / Wilmington).